A 195-amino-acid polypeptide reads, in one-letter code: Imidazoleglycerol-phosphate dehydratase (195 aa).

It belongs to the imidazoleglycerol-phosphate dehydratase family.

It localises to the cytoplasm. It carries out the reaction D-erythro-1-(imidazol-4-yl)glycerol 3-phosphate = 3-(imidazol-4-yl)-2-oxopropyl phosphate + H2O. Its pathway is amino-acid biosynthesis; L-histidine biosynthesis; L-histidine from 5-phospho-alpha-D-ribose 1-diphosphate: step 6/9. This is Imidazoleglycerol-phosphate dehydratase from Campylobacter concisus (strain 13826).